A 48-amino-acid chain; its full sequence is Cytochrome b559 subunit beta (48 aa).

A helical membrane pass occupies residues 23-39 (WLAVHALAIPSVFFLGS). His27 serves as a coordination point for heme.

This sequence belongs to the PsbE/PsbF family. Heterodimer of an alpha subunit and a beta subunit. PSII is composed of 1 copy each of membrane proteins PsbA, PsbB, PsbC, PsbD, PsbE, PsbF, PsbH, PsbI, PsbJ, PsbK, PsbL, PsbM, PsbT, PsbX, PsbY, Psb30/Ycf12, peripheral proteins PsbO, CyanoQ (PsbQ), PsbU, PsbV and a large number of cofactors. It forms dimeric complexes. Heme b serves as cofactor.

Its subcellular location is the cellular thylakoid membrane. Functionally, this b-type cytochrome is tightly associated with the reaction center of photosystem II (PSII). PSII is a light-driven water:plastoquinone oxidoreductase that uses light energy to abstract electrons from H(2)O, generating O(2) and a proton gradient subsequently used for ATP formation. It consists of a core antenna complex that captures photons, and an electron transfer chain that converts photonic excitation into a charge separation. This chain is Cytochrome b559 subunit beta, found in Prochlorococcus marinus (strain MIT 9301).